A 203-amino-acid polypeptide reads, in one-letter code: A-type ATP synthase subunit E (203 aa).

This sequence belongs to the V-ATPase E subunit family. As to quaternary structure, has multiple subunits with at least A(3), B(3), C, D, E, F, H, I and proteolipid K(x).

The protein localises to the cell membrane. Functionally, component of the A-type ATP synthase that produces ATP from ADP in the presence of a proton gradient across the membrane. The chain is A-type ATP synthase subunit E from Methanococcus vannielii (strain ATCC 35089 / DSM 1224 / JCM 13029 / OCM 148 / SB).